Here is a 753-residue protein sequence, read N- to C-terminus: 5-methyltetrahydropteroyltriglutamate--homocysteine methyltransferase (753 aa).

5-methyltetrahydropteroyltri-L-glutamate contacts are provided by residues 17–20 (RELK) and K117. L-homocysteine-binding positions include 431–433 (IGS) and E484. Residues 431-433 (IGS) and E484 each bind L-methionine. Residues 515–516 (RC) and W561 contribute to the 5-methyltetrahydropteroyltri-L-glutamate site. D599 is an L-homocysteine binding site. Residue D599 participates in L-methionine binding. E605 contacts 5-methyltetrahydropteroyltri-L-glutamate. The Zn(2+) site is built by H641, C643, and E665. The active-site Proton donor is the H694. C726 contacts Zn(2+).

It belongs to the vitamin-B12 independent methionine synthase family. It depends on Zn(2+) as a cofactor.

The catalysed reaction is 5-methyltetrahydropteroyltri-L-glutamate + L-homocysteine = tetrahydropteroyltri-L-glutamate + L-methionine. It functions in the pathway amino-acid biosynthesis; L-methionine biosynthesis via de novo pathway; L-methionine from L-homocysteine (MetE route): step 1/1. In terms of biological role, catalyzes the transfer of a methyl group from 5-methyltetrahydrofolate to homocysteine resulting in methionine formation. This is 5-methyltetrahydropteroyltriglutamate--homocysteine methyltransferase from Shigella dysenteriae serotype 1 (strain Sd197).